Here is a 444-residue protein sequence, read N- to C-terminus: Nuclear envelope integral membrane protein 1 (444 aa).

The N-terminal stretch at 1–43 (MAGGMKVAVSPAVGPGPWGSGVGGGGTVRLLLILSGCLVYGTA) is a signal peptide. N125 carries an N-linked (GlcNAc...) asparagine glycan. 5 consecutive transmembrane segments (helical) span residues 161-181 (PKLF…DLLS), 186-206 (FYYS…IIFI), 216-236 (PIYV…QLVF), 245-265 (CYWQ…FAVC), and 289-309 (LCFM…IIIA). Residues 186-297 (FYYSTGMSVG…GLCFMYSGIQ (112 aa)) are a; required for its colocalization with lamins at the nuclear envelope. Residues 336–405 (PVPPRLLTEE…LTPNEVSVHE (70 aa)) form a b; required for interaction with RAN-GTP region. Residues 336–444 (PVPPRLLTEE…PAITQNNFLT (109 aa)) form a required for nuclear localization region. S368, S424, and S425 each carry phosphoserine.

The protein belongs to the NEMP family. In terms of assembly, homooligomer. Interacts with RAN-GTP. Interacts with EMD. Post-translationally, phosphorylation may regulate its interaction with RAN-GTP.

Its subcellular location is the nucleus inner membrane. The protein resides in the nucleus envelope. In terms of biological role, together with EMD, contributes to nuclear envelope stiffness in germ cells. Required for female fertility. Essential for normal erythropoiesis. Required for efficient nuclear envelope opening and enucleation during the late stages of erythroblast maturation. The chain is Nuclear envelope integral membrane protein 1 (NEMP1) from Pongo abelii (Sumatran orangutan).